The primary structure comprises 446 residues: MEAEAADAPPGGVESALSCFSFNQDCTSLATGTKAGYKLFSLSSVEQLDQVHGSNEIPDVYIVERLFSSSLVVVVSHTKPRQMNVYHFKKGTEICNYSYSSNILSIRLNRQRLLVCLEESIYIHNIKDMKLLKTLLDIPANPTGLCALSINHSNSYLAYPGSLTSGEIVLYDGNSLKTVCTIAAHEGTLAAITFNASGSKLASASEKGTVIRVFSVPDGQKLYEFRRGMKRYVTISSLVFSMDSQFLCASSNTETVHIFKLEQVTNSRPEEPSTWSGYMGKMFMAATNYLPTQVSDMMHQDRAFATARLNFSGQRNICTLSTIQKLPRLLVASSSGHLYMYNLDPQDGGECVLIKTHSLLGSGTTEENKENDLRPSLPQSYAATVARPSASSASTVPGYSEDGGALRGEVIPEHEFATGPVCLDDENEFPPIILCRGNQKGKTKQS.

WD repeat units lie at residues 3–42 (AEAADAPPGGVESALSCFSFNQDCTSLATGTKAGYKLFSL), 47–88 (QLDQ…VYHF), 92–126 (TEICNYSYSSNILSIRLNRQRLLVCLEESIYIHNI), 131–173 (LLKT…LYDG), 177–216 (KTVCTIAAHEGTLAAITFNASGSKLASASEKGTVIRVFSV), 222–261 (LYEFRRGMKRYVTISSLVFSMDSQFLCASSNTETVHIFKL), and 304–343 (FATARLNFSGQRNICTLSTIQKLPRLLVASSSGHLYMYNL). The short motif at 131-136 (LLKTLL) is the Nuclear receptor interaction element. The L/FRRG motif signature appears at 225 to 228 (FRRG). Residues 386-406 (ARPSASSASTVPGYSEDGGAL) form a disordered region.

Belongs to the WD repeat PROPPIN family. As to quaternary structure, interacts with androgen receptor (AR) and the estrogen receptors ESR1 and ESR2. Interacts with WIPI2. Interacts with WDR45. Interacts with ATG16L1. May interact with NUDC. Ubiquitously expressed. Highly expressed in skeletal muscle, heart, testis, pancreas and placenta. Highly expressed in G361, Sk-mel-28, Sk-mel-13, WM852 and WM451 cells. Up-regulated in a variety of tumor tissues.

The protein resides in the golgi apparatus. The protein localises to the trans-Golgi network. Its subcellular location is the endosome. It localises to the cytoplasmic vesicle. It is found in the clathrin-coated vesicle. The protein resides in the preautophagosomal structure membrane. The protein localises to the cytoplasm. Its subcellular location is the cytoskeleton. Functionally, component of the autophagy machinery that controls the major intracellular degradation process by which cytoplasmic materials are packaged into autophagosomes and delivered to lysosomes for degradation. Plays an important role in starvation- and calcium-mediated autophagy, as well as in mitophagy. Functions downstream of the ULK1 and PI3-kinases that produce phosphatidylinositol 3-phosphate (PtdIns3P) on membranes of the endoplasmic reticulum once activated. Binds phosphatidylinositol 3-phosphate (PtdIns3P), and maybe other phosphoinositides including PtdIns3,5P2 and PtdIns5P, and is recruited to phagophore assembly sites at the endoplasmic reticulum membranes. There, it assists WIPI2 in the recruitment of ATG12-ATG5-ATG16L1, a complex that directly controls the elongation of the nascent autophagosomal membrane. Together with WDR45/WIPI4, promotes ATG2 (ATG2A or ATG2B)-mediated lipid transfer by enhancing ATG2-association with phosphatidylinositol 3-monophosphate (PI3P)-containing membranes. Involved in xenophagy of Staphylococcus aureus. Invading S.aureus cells become entrapped in autophagosome-like WIPI1 positive vesicles targeted for lysosomal degradation. Also plays a distinct role in controlling the transcription of melanogenic enzymes and melanosome maturation, a process that is distinct from starvation-induced autophagy. May also regulate the trafficking of proteins involved in the mannose-6-phosphate receptor (MPR) recycling pathway. This chain is WD repeat domain phosphoinositide-interacting protein 1 (WIPI1), found in Homo sapiens (Human).